Reading from the N-terminus, the 233-residue chain is Protein YIPF6 (233 aa).

The Cytoplasmic segment spans residues M1 to D84. Residues W85 to N105 traverse the membrane as a helical segment. Topologically, residues A106–D111 are lumenal. Residues G112–L132 traverse the membrane as a helical segment. Residues N133–S142 are Cytoplasmic-facing. The chain crosses the membrane as a helical span at residues F143–V163. Residues C164 to R180 lie on the Lumenal side of the membrane. The chain crosses the membrane as a helical span at residues L181–D201. At S202 to R208 the chain is on the cytoplasmic side. A helical membrane pass occupies residues A209 to F229. Residues N230–S233 lie on the Lumenal side of the membrane.

This sequence belongs to the YIP1 family.

It is found in the golgi apparatus membrane. This Xenopus tropicalis (Western clawed frog) protein is Protein YIPF6 (yipf6).